The following is a 122-amino-acid chain: Large ribosomal subunit protein uL22 (122 aa).

It belongs to the universal ribosomal protein uL22 family. In terms of assembly, part of the 50S ribosomal subunit.

Functionally, this protein binds specifically to 23S rRNA; its binding is stimulated by other ribosomal proteins, e.g. L4, L17, and L20. It is important during the early stages of 50S assembly. It makes multiple contacts with different domains of the 23S rRNA in the assembled 50S subunit and ribosome. Its function is as follows. The globular domain of the protein is located near the polypeptide exit tunnel on the outside of the subunit, while an extended beta-hairpin is found that lines the wall of the exit tunnel in the center of the 70S ribosome. This is Large ribosomal subunit protein uL22 from Prochlorococcus marinus (strain MIT 9303).